Here is a 900-residue protein sequence, read N- to C-terminus: Endoglucanase H (900 aa).

An N-terminal signal peptide occupies residues 1 to 44 (MKKRLLVSFLVLSIIVGLLSFQSLGNYNSGLKIGAWVGTQPSES). Residues 45-298 (AIKSFQELQG…NSSPEALAAY (254 aa)) enclose the GH26 domain. The Proton donor role is filled by Glu-131. Glu-244 serves as the catalytic Nucleophile. The tract at residues 300–630 (EAIGAGSSNP…DTEILNALFN (331 aa)) is catalytic. The tract at residues 303–326 (GAGSSNPTPTPTWTSTPPSSSPKA) is disordered. A compositionally biased stretch (low complexity) spans 306 to 324 (SSNPTPTPTWTSTPPSSSP). Residue Glu-460 is the Proton donor of the active site. Glu-565 (nucleophile) is an active-site residue. The 246-residue stretch at 655 to 900 (AVGEKMLDDF…LLKAISEIPI (246 aa)) folds into the CBM11 domain. The Dockerin domain maps to 827–900 (PSIKHGDLNF…LLKAISEIPI (74 aa)).

It in the N-terminal section; belongs to the glycosyl hydrolase 5 (cellulase A) family. The protein in the C-terminal section; belongs to the glycosyl hydrolase 26 family.

The enzyme catalyses Endohydrolysis of (1-&gt;4)-beta-D-glucosidic linkages in cellulose, lichenin and cereal beta-D-glucans.. Its function is as follows. This enzyme catalyzes the endohydrolysis of 1,4-beta-glucosidic linkages in cellulose, lichenin and cereal beta-D-glucans. The sequence is that of Endoglucanase H (celH) from Acetivibrio thermocellus (strain ATCC 27405 / DSM 1237 / JCM 9322 / NBRC 103400 / NCIMB 10682 / NRRL B-4536 / VPI 7372) (Clostridium thermocellum).